Reading from the N-terminus, the 867-residue chain is Retinoblastoma-related protein 1 (867 aa).

The domain A stretch occupies residues 275 to 476 (TPVTSAMTTA…EKGSSLYNSL (202 aa)). The pocket; binds RPD3I and RBAP1 stretch occupies residues 275–722 (TPVTSAMTTA…NEVFVPAAKP (448 aa)). The interval 477 to 594 (IVARPSVASE…PVGGNEKCAD (118 aa)) is spacer. The segment at 512–563 (EGLPATPSKKRAAGPDDNADPRSPKRSCNESRNTVVERNLQTPPPKQSHMVS) is disordered. Over residues 530–540 (ADPRSPKRSCN) the composition is skewed to basic and acidic residues. Positions 541–552 (ESRNTVVERNLQ) are enriched in polar residues. Residues 595–722 (VTIHIFFSKI…NEVFVPAAKP (128 aa)) are domain B. 2 disordered regions span residues 734-762 (PEDK…MSPK) and 843-867 (QING…ETDT).

Belongs to the retinoblastoma protein (RB) family. In terms of assembly, interacts with RPD3I, RBAP1, the Arabidopsis cyclin CYCD3-1, the mastrevirus replication-associated protein A (RepA) and the begomovirus replication-associated protein (Rep). In terms of tissue distribution, ubiquitous.

The protein localises to the nucleus. Its function is as follows. Regulator of biological processes that recruits a histone deacetylase to control gene transcription. May play a role in the entry into mitosis, negatively regulating the cell proliferation. Formation of stable complexes with geminiviridae replication-associated proteins may create a cellular environment which favors viral DNA replication. The chain is Retinoblastoma-related protein 1 (RBR1) from Zea mays (Maize).